The chain runs to 196 residues: Transmembrane protein 126A (196 aa).

The Mitochondrial matrix portion of the chain corresponds to 1–34; that stretch reads MESHKPSTNKDDLIFNIIPRKIKQLPESDRNLLE. A helical transmembrane segment spans residues 35–55; the sequence is YGSAYIGLNAAFGGLIANSLF. At 56–57 the chain is on the mitochondrial intermembrane side; that stretch reads RR. A helical transmembrane segment spans residues 58 to 78; the sequence is ILNVTQARVASSLPMAVIPFL. The Mitochondrial matrix portion of the chain corresponds to 79-106; it reads TANLSYHSFVSLPLSTGNLNCEICTTTR. A helical membrane pass occupies residues 107–127; sequence GTLVGFVLGGLYPILLAIPVN. Topologically, residues 128–159 are mitochondrial intermembrane; sequence GGLAARYESSPLPQRGNIFNYWITISKPVFRK. The chain crosses the membrane as a helical span at residues 160–176; sequence MLFPTLLQTAFAAYLGS. The Mitochondrial matrix portion of the chain corresponds to 177-196; sequence RQYKLLIKALQLPEPDLEIQ.

The protein belongs to the TMEM126 family. Interacts with OXA1L; promoting cotranslational quality control in mitochondria.

It is found in the mitochondrion inner membrane. Its function is as follows. Protein required for the cotranslational protein quality control in the inner membrane of the mitochondria. Associates with newly synthesized polypeptides and may act as a chaperone that cooperates with OXA1L for the insertion of newly synthesized mitochondrial proteins into the inner membrane. Required for the assembly of the ND4 module of mitochondrial complex I. The chain is Transmembrane protein 126A (Tmem126a) from Rattus norvegicus (Rat).